Reading from the N-terminus, the 153-residue chain is Actin-related protein 2/3 complex subunit 5-like protein (153 aa).

Serine 64 carries the phosphoserine modification.

This sequence belongs to the ARPC5 family. May be a component of the Arp2/3 complex in which it may replace ARPC5.

It localises to the cytoplasm. It is found in the cytoskeleton. May function as component of the Arp2/3 complex which is involved in regulation of actin polymerization and together with an activating nucleation-promoting factor (NPF) mediates the formation of branched actin networks. This is Actin-related protein 2/3 complex subunit 5-like protein (ARPC5L) from Pongo abelii (Sumatran orangutan).